The following is a 1567-amino-acid chain: Transmembrane protein 131 homolog (1567 aa).

A signal peptide spans 1-32; sequence MPTQVQMRPLLRIFAEPILLILIFLFTLGAKG. The Lumenal segment spans residues 33-1049; that stretch reads EKVLQETFLG…RPGWESSLKN (1017 aa). Residues 55–228 form a papD-L domain region; the sequence is RLVPSRLDFG…TLKPVIRISF (174 aa). N84, N114, N168, N235, N316, N317, N342, N372, N409, N462, N563, N890, and N1013 each carry an N-linked (GlcNAc...) asparagine glycan. The chain crosses the membrane as a helical span at residues 1050–1070; that stretch reads AALVVLLASFGLVLVAAVFDA. Over 1071 to 1567 the chain is Cytoplasmic; that stretch reads KAIMVQQNAY…SQRNNHNHMN (497 aa). Residues 1096 to 1130 are a coiled coil; that stretch reads RNIVKLQAEEAAAKAESVQQQQKVKNGQLKELRKR. Disordered stretches follow at residues 1112 to 1337, 1364 to 1386, and 1502 to 1567; these read SVQQ…SPDA, PTDN…IGDN, and PGLE…NHMN. 2 stretches are compositionally biased toward low complexity: residues 1132-1150 and 1166-1183; these read VVNS…SPWS and KTVV…APAA. S1201 and S1258 each carry phosphoserine. Residues 1247-1259 show a composition bias toward polar residues; sequence AKSSPPQQENISP. Positions 1284-1298 are enriched in basic and acidic residues; sequence PGRERERERRSKDQK. The span at 1319 to 1331 shows a compositional bias: polar residues; it reads KLNFGQTTNSTSP. Polar residues-rich tracts occupy residues 1507–1519 and 1536–1561; these read SARQ…QEQV and LPTQ…SQRN.

The protein belongs to the TMEM131 family. In terms of assembly, may interact (via PapD-L domain) with collagen proteins (via C-terminus); the interaction is direct and is involved in assembly and TRAPPIII ER-to-Golgi transport complex-dependent secretion of collagen.

The protein resides in the membrane. Its function is as follows. Collagen binding transmembrane protein involved in collagen secretion, probably by recruiting the ER-to-Golgi transport complex TRAPPIII. The sequence is that of Transmembrane protein 131 homolog from Drosophila melanogaster (Fruit fly).